A 114-amino-acid chain; its full sequence is Hydrogenase maturation factor HypA (114 aa).

Residue histidine 2 coordinates Ni(2+). Residues cysteine 73, cysteine 76, cysteine 90, and cysteine 93 each coordinate Zn(2+).

It belongs to the HypA/HybF family.

Its function is as follows. Involved in the maturation of [NiFe] hydrogenases. Required for nickel insertion into the metal center of the hydrogenase. The chain is Hydrogenase maturation factor HypA from Chloroflexus aurantiacus (strain ATCC 29366 / DSM 635 / J-10-fl).